The primary structure comprises 728 residues: Hepatocyte growth factor (728 aa).

The N-terminal stretch at 1-32 is a signal peptide; the sequence is MMWGTKLLPVLLLQHVLLHLLLLPVTIPYAEG. Glutamine 33 carries the post-translational modification Pyrrolidone carboxylic acid. Residues 38-124 form the PAN domain; the sequence is NTLHEFKKSA…HEFDLYENKD (87 aa). 8 disulfides stabilise this stretch: cysteine 71-cysteine 97, cysteine 75-cysteine 85, cysteine 129-cysteine 207, cysteine 150-cysteine 190, cysteine 178-cysteine 202, cysteine 212-cysteine 289, cysteine 233-cysteine 272, and cysteine 261-cysteine 284. 2 consecutive Kringle domains span residues 129-207 and 212-289; these read CIIG…IPQC and CMTC…IKMC. N-linked (GlcNAc...) asparagine glycosylation is present at asparagine 295. Cystine bridges form between cysteine 306-cysteine 384, cysteine 327-cysteine 366, cysteine 355-cysteine 378, cysteine 392-cysteine 470, cysteine 413-cysteine 453, cysteine 441-cysteine 465, cysteine 488-cysteine 607, cysteine 520-cysteine 536, cysteine 615-cysteine 682, cysteine 645-cysteine 661, and cysteine 672-cysteine 700. Kringle domains lie at 306–384 and 392–470; these read CIKG…IPKC and CYRG…ISRC. An N-linked (GlcNAc...) asparagine glycan is attached at asparagine 403. The region spanning 496-724 is the Peptidase S1 domain; that stretch reads VVNGIPTQTT…YAKWIHKVIL (229 aa). N-linked (GlcNAc...) asparagine glycans are attached at residues asparagine 569 and asparagine 656.

The protein belongs to the peptidase S1 family. Plasminogen subfamily. In terms of assembly, dimer of an alpha chain and a beta chain linked by a disulfide bond. Interacts with SRPX2; the interaction increases HGF mitogenic activity. In terms of processing, the single-chain precursor undergoes proteolytic processing by TMPRSS13 resulting in an active two-chain form. The single-chain precursor undergoes proteolytic processing by HGFAC resulting in an active two-chain form.

In terms of biological role, potent mitogen for mature parenchymal hepatocyte cells, seems to be a hepatotrophic factor, and acts as a growth factor for a broad spectrum of tissues and cell types. Activating ligand for the receptor tyrosine kinase MET by binding to it and promoting its dimerization. Activates MAPK signaling following TMPRSS13 cleavage and activation. The chain is Hepatocyte growth factor (Hgf) from Rattus norvegicus (Rat).